Consider the following 312-residue polypeptide: DNA-directed RNA polymerase subunit alpha (312 aa).

An alpha N-terminal domain (alpha-NTD) region spans residues 1-226 (MIEFEKPNIT…EHLNLFTNLT (226 aa)). Residues 243-312 (DDRILERTIE…DLGLGLKNDK (70 aa)) are alpha C-terminal domain (alpha-CTD).

This sequence belongs to the RNA polymerase alpha chain family. In terms of assembly, homodimer. The RNAP catalytic core consists of 2 alpha, 1 beta, 1 beta' and 1 omega subunit. When a sigma factor is associated with the core the holoenzyme is formed, which can initiate transcription.

It catalyses the reaction RNA(n) + a ribonucleoside 5'-triphosphate = RNA(n+1) + diphosphate. In terms of biological role, DNA-dependent RNA polymerase catalyzes the transcription of DNA into RNA using the four ribonucleoside triphosphates as substrates. The sequence is that of DNA-directed RNA polymerase subunit alpha from Streptococcus sanguinis (strain SK36).